The chain runs to 822 residues: Probable phosphoketolase (822 aa).

The protein belongs to the XFP family. Thiamine diphosphate is required as a cofactor.

In Nocardia farcinica (strain IFM 10152), this protein is Probable phosphoketolase.